The following is a 131-amino-acid chain: Profilin-6 (131 aa).

The cysteines at positions 13 and 115 are disulfide-linked. An Involved in PIP2 interaction motif is present at residues 81-97 (AVIRGKKGSGGITVKKT). Residue Thr-111 is modified to Phosphothreonine.

Belongs to the profilin family. As to quaternary structure, occurs in many kinds of cells as a complex with monomeric actin in a 1:1 ratio. In terms of processing, phosphorylated by MAP kinases.

The protein resides in the cytoplasm. The protein localises to the cytoskeleton. In terms of biological role, binds to actin and affects the structure of the cytoskeleton. At high concentrations, profilin prevents the polymerization of actin, whereas it enhances it at low concentrations. This chain is Profilin-6, found in Zea mays (Maize).